A 294-amino-acid polypeptide reads, in one-letter code: MPPFSHVPVLADAVLDAARRIPRPDGLLIDATLGGGGHSALLLEQHPGLRLIGLDQDATARAAAAERLASFGDRVSIVATNFADYVPPEPAVMVLADLGVSSPQLDVAERGFSFRLDGPLDMRMNAGGEGETAAELIDRLEENELADLIYGYGEERLSRRIARRIKADLKDRGSYDGTAALAYAVAGCYPPKSRRGRIHPATRTFQALRIAVNDELGVLDRLLQQAPDWLEPDGLLGIISFHSLEDRRVKTAFLRDERLQRITRKPVVATEQEEEANPRTRSAKWRVAQRLAAA.

S-adenosyl-L-methionine-binding positions include 36 to 38, D55, F82, D97, and Q104; that span reads GGH.

Belongs to the methyltransferase superfamily. RsmH family.

The protein resides in the cytoplasm. The enzyme catalyses cytidine(1402) in 16S rRNA + S-adenosyl-L-methionine = N(4)-methylcytidine(1402) in 16S rRNA + S-adenosyl-L-homocysteine + H(+). Functionally, specifically methylates the N4 position of cytidine in position 1402 (C1402) of 16S rRNA. In Synechococcus sp. (strain CC9605), this protein is Ribosomal RNA small subunit methyltransferase H.